Reading from the N-terminus, the 423-residue chain is Glutamyl-tRNA reductase (423 aa).

Residues 49-52 (TCNR), S109, 114-116 (EGQ), and Q120 contribute to the substrate site. The active-site Nucleophile is C50. 189 to 194 (GAGETG) is an NADP(+) binding site.

It belongs to the glutamyl-tRNA reductase family. Homodimer.

It catalyses the reaction (S)-4-amino-5-oxopentanoate + tRNA(Glu) + NADP(+) = L-glutamyl-tRNA(Glu) + NADPH + H(+). Its pathway is porphyrin-containing compound metabolism; protoporphyrin-IX biosynthesis; 5-aminolevulinate from L-glutamyl-tRNA(Glu): step 1/2. The protein operates within porphyrin-containing compound metabolism; chlorophyll biosynthesis. Functionally, catalyzes the NADPH-dependent reduction of glutamyl-tRNA(Glu) to glutamate 1-semialdehyde (GSA). This chain is Glutamyl-tRNA reductase, found in Chlorobium limicola (strain DSM 245 / NBRC 103803 / 6330).